A 350-amino-acid chain; its full sequence is Inhibitor of nuclear factor kappa-B kinase-interacting protein (350 aa).

Residues 1 to 11 (MSEVKSRKKSG) show a composition bias toward basic residues. Residues 1–39 (MSEVKSRKKSGPKGAPAAEPGKRSEGGKTPVARSSGGGG) form a disordered region. Residues 46–62 (CLSLLSLGTCLGLAWFV) form a helical membrane-spanning segment. N-linked (GlcNAc...) asparagine glycosylation is present at Asn-144. Residues 184 to 217 (GLVTDVISLTDSVQELENKIEKVEKNTVKNIGDL) are a coiled coil. A glycan (N-linked (GlcNAc...) asparagine) is linked at Asn-328.

N-glycosylated. Isoform 4 is glycosylated at Asn-154. Expressed in vein endothelial cells. Isoform 4 is expressed in lung, kidney, spleen, thymus and skeletal muscle.

The protein resides in the endoplasmic reticulum membrane. In terms of biological role, target of p53/TP53 with pro-apoptotic function. This is Inhibitor of nuclear factor kappa-B kinase-interacting protein (IKBIP) from Homo sapiens (Human).